Here is a 717-residue protein sequence, read N- to C-terminus: DNA-binding protein RFX2 (717 aa).

A disordered region spans residues 1–28; it reads MQNSEGGADSPASVALRPAAQPMPASPQ. Ser-26 carries the phosphoserine modification. The segment at residues 194–269 is a DNA-binding region (RFX-type winged-helix); it reads HLQWLLDNYE…YHYYGIRLKP (76 aa). Positions 286–318 are disordered; it reads RQQPTHQKPRYRPAQKSDSLGDGSAHSNMHGMP. A Phosphoserine modification is found at Ser-411. Over residues 685 to 710 the composition is skewed to basic and acidic residues; the sequence is DGHSSEADVDGRSLGEPLVKRERSDP. The interval 685-717 is disordered; sequence DGHSSEADVDGRSLGEPLVKRERSDPSHPLQGI.

The protein belongs to the RFX family. As to quaternary structure, homodimer; probably only forms homodimers in testis. Heterodimer; heterodimerizes with RFX1 and RFX3.

The protein resides in the nucleus. It localises to the cytoplasm. In terms of biological role, transcription factor that acts as a key regulator of spermatogenesis. Acts by regulating expression of genes required for the haploid phase during spermiogenesis, such as genes required for cilium assembly and function. Recognizes and binds the X-box, a regulatory motif with DNA sequence 5'-GTNRCC(0-3N)RGYAAC-3' present on promoters. Probably activates transcription of the testis-specific histone gene H1-6. This is DNA-binding protein RFX2 (Rfx2) from Mus musculus (Mouse).